The primary structure comprises 124 residues: Small ribosomal subunit protein uS12 (124 aa).

Aspartate 89 carries the post-translational modification 3-methylthioaspartic acid.

Belongs to the universal ribosomal protein uS12 family. In terms of assembly, part of the 30S ribosomal subunit. Contacts proteins S8 and S17. May interact with IF1 in the 30S initiation complex.

With S4 and S5 plays an important role in translational accuracy. Its function is as follows. Interacts with and stabilizes bases of the 16S rRNA that are involved in tRNA selection in the A site and with the mRNA backbone. Located at the interface of the 30S and 50S subunits, it traverses the body of the 30S subunit contacting proteins on the other side and probably holding the rRNA structure together. The combined cluster of proteins S8, S12 and S17 appears to hold together the shoulder and platform of the 30S subunit. The protein is Small ribosomal subunit protein uS12 of Treponema pallidum subsp. pallidum (strain SS14).